A 348-amino-acid polypeptide reads, in one-letter code: Phenylalanine--tRNA ligase alpha subunit (348 aa).

E268 is a binding site for Mg(2+).

This sequence belongs to the class-II aminoacyl-tRNA synthetase family. Phe-tRNA synthetase alpha subunit type 1 subfamily. As to quaternary structure, tetramer of two alpha and two beta subunits. Mg(2+) serves as cofactor.

It localises to the cytoplasm. The catalysed reaction is tRNA(Phe) + L-phenylalanine + ATP = L-phenylalanyl-tRNA(Phe) + AMP + diphosphate + H(+). The protein is Phenylalanine--tRNA ligase alpha subunit of Bordetella parapertussis (strain 12822 / ATCC BAA-587 / NCTC 13253).